The primary structure comprises 297 residues: N-acetylneuraminate lyase (297 aa).

Aceneuramate contacts are provided by Ser-47 and Thr-48. The active-site Proton donor is the Tyr-137. The Schiff-base intermediate with substrate role is filled by Lys-165. Positions 167, 189, 191, 192, and 208 each coordinate aceneuramate.

The protein belongs to the DapA family. NanA subfamily. As to quaternary structure, homotetramer.

Its subcellular location is the cytoplasm. It catalyses the reaction aceneuramate = aldehydo-N-acetyl-D-mannosamine + pyruvate. Its pathway is amino-sugar metabolism; N-acetylneuraminate degradation; D-fructose 6-phosphate from N-acetylneuraminate: step 1/5. Catalyzes the reversible aldol cleavage of N-acetylneuraminic acid (sialic acid; Neu5Ac) to form pyruvate and N-acetylmannosamine (ManNAc) via a Schiff base intermediate. The chain is N-acetylneuraminate lyase from Escherichia coli O139:H28 (strain E24377A / ETEC).